The following is a 167-amino-acid chain: Regulatory protein RecX (167 aa).

Residues 19-49 (ESELRRKLASQPFSAKGHWGKQTGRSDNEPV) are disordered.

This sequence belongs to the RecX family.

Its subcellular location is the cytoplasm. In terms of biological role, modulates RecA activity. The polypeptide is Regulatory protein RecX (Yersinia enterocolitica serotype O:8 / biotype 1B (strain NCTC 13174 / 8081)).